Consider the following 371-residue polypeptide: Barbiturase 1 (371 aa).

The tract at residues methionine 1 to aspartate 103 is RU A. Residues arginine 53 and serine 82 to glycine 83 contribute to the substrate site. The segment at arginine 115–proline 250 is RU B. The active site involves lysine 165. Residues asparagine 197 and serine 233 to serine 234 each bind substrate. The active-site Nucleophile is serine 233. The tract at residues tyrosine 256–glycine 371 is RU C. Glutamate 304 lines the Mg(2+) pocket. Substrate is bound by residues lysine 331 and serine 350–valine 351. Mg(2+) contacts are provided by alanine 353, glutamine 356, glycine 357, proline 358, and glycine 361.

This sequence belongs to the cyclic amide hydrolase (CyAH) family. Homotetramer.

It catalyses the reaction barbiturate + H2O = 3-oxo-3-ureidopropanoate. The protein operates within pyrimidine metabolism; uracil degradation via oxidative pathway; malonate and urea from uracil: step 2/3. With respect to regulation, inhibited by cyanuric acid. Its function is as follows. Responsible for the hydrolysis of barbituric acid (2,4,6-trihydroxy-1,3-pyrimidine), an intermediate in the oxidative catabolism of pyrimidines. Catalyzes the hydrolytic opening of the pyrimidine ring of barbituric acid to yield ureidomalonic acid. This chain is Barbiturase 1, found in Nocardioides sp. (strain ATCC BAA-499 / JS614).